The primary structure comprises 257 residues: Chymotrypsin-like elastase family member 3B (257 aa).

A signal peptide (or 3) is located at residues 1–2 (VA). Residues 3–15 (SGYGPPSSHPSSR) constitute a propeptide, activation peptide. Positions 16–255 (VVNGEDAVPY…FIDWIEETIA (240 aa)) constitute a Peptidase S1 domain. N-linked (GlcNAc...) asparagine glycosylation occurs at Asn38. Intrachain disulfides connect Cys45/Cys61 and Cys104/Cys107. His60 acts as the Charge relay system in catalysis. Asp110 serves as the catalytic Charge relay system. Cystine bridges form between Cys144–Cys210, Cys175–Cys191, and Cys200–Cys231. Ser204 (charge relay system) is an active-site residue.

Belongs to the peptidase S1 family. Elastase subfamily.

The enzyme catalyses Preferential cleavage: Ala-|-Xaa. Does not hydrolyze elastin.. Its function is as follows. Efficient protease with alanine specificity but only little elastolytic activity. This chain is Chymotrypsin-like elastase family member 3B (CELA3B), found in Macaca mulatta (Rhesus macaque).